We begin with the raw amino-acid sequence, 589 residues long: Monocopper oxidase-like protein SKS1 (589 aa).

The first 24 residues, 1–24, serve as a signal peptide directing secretion; sequence MAATCSLLASFLLCFALLSAVSFA. N-linked (GlcNAc...) asparagine glycosylation is found at asparagine 62, asparagine 111, asparagine 204, asparagine 243, asparagine 260, asparagine 296, asparagine 345, asparagine 365, asparagine 433, and asparagine 447. A disordered region spans residues 322–356; sequence LPVPKTDVSSPWSAMSQPKTIRQNTSASGARPNPQ. Polar residues predominate over residues 328–349; it reads DVSSPWSAMSQPKTIRQNTSAS. Histidine 455 serves as a coordination point for Cu cation. The GPI-anchor amidated serine moiety is linked to residue serine 563. The propeptide at 564–589 is removed in mature form; that stretch reads AATSILNGHLKLMLLMVLLASVFRFC.

The protein belongs to the multicopper oxidase family. It depends on Cu cation as a cofactor.

It localises to the cell membrane. The chain is Monocopper oxidase-like protein SKS1 (SKS1) from Arabidopsis thaliana (Mouse-ear cress).